A 127-amino-acid chain; its full sequence is MPKEFSRSQRVAEQVRRELAELIRLEVKDPRVGFITLTDVEITPDYAHAKVFFTSMKGEEGLDEILTGLHRASGFLRRELGKRVRIHTLPELHFHYDSSVERGSRMSQLIDQVVRDDDARHKDDPES.

This sequence belongs to the RbfA family. As to quaternary structure, monomer. Binds 30S ribosomal subunits, but not 50S ribosomal subunits or 70S ribosomes.

The protein localises to the cytoplasm. In terms of biological role, one of several proteins that assist in the late maturation steps of the functional core of the 30S ribosomal subunit. Associates with free 30S ribosomal subunits (but not with 30S subunits that are part of 70S ribosomes or polysomes). Required for efficient processing of 16S rRNA. May interact with the 5'-terminal helix region of 16S rRNA. This chain is Ribosome-binding factor A, found in Aromatoleum aromaticum (strain DSM 19018 / LMG 30748 / EbN1) (Azoarcus sp. (strain EbN1)).